The chain runs to 307 residues: MEILAPSSYFSSSSWFLEESRSTTRWTAAENKAFENALAVFDENTPNRWERVAERVPGKTVGDVMRQYKELEDDVSSIEAGFVPVPGYSTSSPFTLEWGSGHGFDGFKQSYGTGGRKSSSGRPSEQERKKGVPWTEEEHKLFLMGLKKYGKGDWRNISRNFVITRTPTQVASHAQKYFIRQLSGGKDKRRASIHDITTVNLSDNQTPSPDNKKPPSSPDHSMAQQQTSSTSIHKLPFQWDQTSNETIMGFASSGHHGNMFQSNPFGMNSYGFKMQGQQMQRGGFCDTYLGSQNMAFQMQSGLHFPNA.

Residues 21–74 (RSTTRWTAAENKAFENALAVFDENTPNRWERVAERVPGKTVGDVMRQYKELEDD) form the SANT domain. The disordered stretch occupies residues 109-133 (QSYGTGGRKSSSGRPSEQERKKGVP). Over residues 124–133 (SEQERKKGVP) the composition is skewed to basic and acidic residues. An HTH myb-type domain is found at 126 to 182 (QERKKGVPWTEEEHKLFLMGLKKYGKGDWRNISRNFVITRTPTQVASHAQKYFIRQL). A DNA-binding region (H-T-H motif) is located at residues 154–178 (WRNISRNFVITRTPTQVASHAQKYF). Composition is skewed to polar residues over residues 196–206 (ITTVNLSDNQT) and 222–231 (MAQQQTSSTS). Residues 196–231 (ITTVNLSDNQTPSPDNKKPPSSPDHSMAQQQTSSTS) are disordered.

The protein localises to the nucleus. Its function is as follows. Involved in the dorsovental asymmetry of flowers. Promotes ventral identity. This chain is Transcription factor DIVARICATA (DIVARICATA), found in Antirrhinum majus (Garden snapdragon).